Consider the following 319-residue polypeptide: Ribonuclease Z (319 aa).

Zn(2+) is bound by residues His-62, His-64, Asp-66, His-67, His-145, Asp-215, and His-273. The active-site Proton acceptor is the Asp-66.

Belongs to the RNase Z family. In terms of assembly, homodimer. It depends on Zn(2+) as a cofactor.

It carries out the reaction Endonucleolytic cleavage of RNA, removing extra 3' nucleotides from tRNA precursor, generating 3' termini of tRNAs. A 3'-hydroxy group is left at the tRNA terminus and a 5'-phosphoryl group is left at the trailer molecule.. Zinc phosphodiesterase, which displays some tRNA 3'-processing endonuclease activity. Probably involved in tRNA maturation, by removing a 3'-trailer from precursor tRNA. This is Ribonuclease Z from Borreliella burgdorferi (strain ATCC 35210 / DSM 4680 / CIP 102532 / B31) (Borrelia burgdorferi).